The following is a 127-amino-acid chain: Large ribosomal subunit protein bL12 (127 aa).

Belongs to the bacterial ribosomal protein bL12 family. As to quaternary structure, homodimer. Part of the ribosomal stalk of the 50S ribosomal subunit. Forms a multimeric L10(L12)X complex, where L10 forms an elongated spine to which 2 to 4 L12 dimers bind in a sequential fashion. Binds GTP-bound translation factors.

Its function is as follows. Forms part of the ribosomal stalk which helps the ribosome interact with GTP-bound translation factors. Is thus essential for accurate translation. This chain is Large ribosomal subunit protein bL12, found in Symbiobacterium thermophilum (strain DSM 24528 / JCM 14929 / IAM 14863 / T).